We begin with the raw amino-acid sequence, 574 residues long: MANSPHGGVLKDLLARDAPRHDELAAEAETLPAIVLSERQLCDLELIMNGGFSPLEGFMTQKDFDGVCENCRLADGHLFSMPITLDASQQVISDSNLKPGSRVTLRDFRDDRNLAILTIEDIYRADKEKEAKLVFGGDPEHPAIKYLNTKVEDFYIGGKIEAVNKLNHYDYVALRYSPAELRVHFDKLGWTRVVAFQTRNPMHRAHRELTVRAARARQANVLIHPVVGLTKPGDIDHFTRVRAYQALLPRYPNGMAVLGLLPLAMRMGGPREAIWHAIIRKNHGATHFIVGRDHAGPGKNSKGEEFYGPYDAQHAVEKYREELGIEVVEFQQVTYLPDTDEYKPKDEVPAGIKTLDISGTELRNRLRTGAHIPEWFSYPEVVKILRESSPPRATQGFTIFLTGYMNSGKDAIARALQVTLNQQGGRSVTLLLGDTVRHELSSELGFSAEDRHTNVQRIAFVAGELTRAGAAVIAAPIAPYERSRKAAREAVSGLGGSFFLVHVNTPLEYCEKTDKRGIYAKARRGEIKGFTGVDDPYEAPENADLVVDVSKQSVRSIVHEIILMLESEGYFDRL.

An N-terminal region spans residues 1–169; the sequence is MANSPHGGVL…IEAVNKLNHY (169 aa). The interval 170 to 394 is catalytic; sequence DYVALRYSPA…LRESSPPRAT (225 aa). Gln-197 provides a ligand contact to sulfate. ATP-binding positions include 197 to 200 and 291 to 294; these read QTRN and GRDH. Residues Thr-198, Arg-199, and Asn-200 contribute to the active site. A sulfate-binding site is contributed by Arg-199. Position 295 (Ala-295) interacts with sulfate. Val-333 contributes to the ATP binding site. Residues 395 to 574 are allosteric regulation domain; adenylyl-sulfate kinase-like; sequence QGFTIFLTGY…LESEGYFDRL (180 aa). Residues 434–437, Arg-451, 477–478, and Arg-516 contribute to the 3'-phosphoadenylyl sulfate site; these read DTVR and IA.

This sequence in the N-terminal section; belongs to the sulfate adenylyltransferase family. In the C-terminal section; belongs to the APS kinase family. In terms of assembly, homohexamer. Dimer of trimers.

Its subcellular location is the cytoplasm. It catalyses the reaction sulfate + ATP + H(+) = adenosine 5'-phosphosulfate + diphosphate. Its pathway is sulfur metabolism; hydrogen sulfide biosynthesis; sulfite from sulfate: step 1/3. Allosterically inhibited by 3'-phosphoadenosine 5'-phosphosulfate (PAPS). Functionally, catalyzes the first intracellular reaction of sulfate assimilation, forming adenosine-5'-phosphosulfate (APS) from inorganic sulfate and ATP. Plays an important role in sulfate activation as a component of the biosynthesis pathway of sulfur-containing amino acids. This is Sulfate adenylyltransferase from Aspergillus terreus (strain NIH 2624 / FGSC A1156).